The primary structure comprises 124 residues: MATVNQLVRKPRTPKVEKTNVPALNACPQKRGVCTRVYTTTPKKPNSALRKVARVRLTNGFEVTSYIGGEGHNLQEHSVILIRGGRVKDLPGVRYHTVRGALDCAGVTSRRQGRSKYGAKRPKS.

D89 is subject to 3-methylthioaspartic acid.

This sequence belongs to the universal ribosomal protein uS12 family. In terms of assembly, part of the 30S ribosomal subunit. Contacts proteins S8 and S17. May interact with IF1 in the 30S initiation complex.

Functionally, with S4 and S5 plays an important role in translational accuracy. In terms of biological role, interacts with and stabilizes bases of the 16S rRNA that are involved in tRNA selection in the A site and with the mRNA backbone. Located at the interface of the 30S and 50S subunits, it traverses the body of the 30S subunit contacting proteins on the other side and probably holding the rRNA structure together. The combined cluster of proteins S8, S12 and S17 appears to hold together the shoulder and platform of the 30S subunit. The protein is Small ribosomal subunit protein uS12 of Shewanella frigidimarina (strain NCIMB 400).